Here is a 413-residue protein sequence, read N- to C-terminus: Multidrug resistance protein MdtA (413 aa).

Positions 1-20 (MKGSNTFRWAIAIGVVVAAA) are cleaved as a signal peptide. Disordered regions lie at residues 31–57 (SPTA…RDGP) and 392–413 (PQTT…GARA). Basic and acidic residues predominate over residues 397–413 (ADEKSPSRHEGQKGARA).

Belongs to the membrane fusion protein (MFP) (TC 8.A.1) family. As to quaternary structure, part of a tripartite efflux system composed of MdtA, MdtB and MdtC.

The protein localises to the cell inner membrane. The chain is Multidrug resistance protein MdtA from Salmonella heidelberg (strain SL476).